Here is a 338-residue protein sequence, read N- to C-terminus: 1-aminocyclopropane-1-carboxylate deaminase (338 aa).

Residue Lys-51 is modified to N6-(pyridoxal phosphate)lysine. Ser-78 functions as the Nucleophile in the catalytic mechanism.

The protein belongs to the ACC deaminase/D-cysteine desulfhydrase family. Homotrimer. Pyridoxal 5'-phosphate is required as a cofactor.

It carries out the reaction 1-aminocyclopropane-1-carboxylate + H2O = 2-oxobutanoate + NH4(+). In terms of biological role, catalyzes a cyclopropane ring-opening reaction, the irreversible conversion of 1-aminocyclopropane-1-carboxylate (ACC) to ammonia and alpha-ketobutyrate. Allows growth on ACC as a nitrogen source. The protein is 1-aminocyclopropane-1-carboxylate deaminase of Pseudomonas syringae pv. tomato (strain ATCC BAA-871 / DC3000).